A 180-amino-acid polypeptide reads, in one-letter code: Endoribonuclease YbeY (180 aa).

Zn(2+) is bound by residues His-149, His-153, and His-159.

The protein belongs to the endoribonuclease YbeY family. Zn(2+) serves as cofactor.

It localises to the cytoplasm. Functionally, single strand-specific metallo-endoribonuclease involved in late-stage 70S ribosome quality control and in maturation of the 3' terminus of the 16S rRNA. This Prochlorococcus marinus (strain MIT 9515) protein is Endoribonuclease YbeY.